Reading from the N-terminus, the 338-residue chain is Protein SPATA31F3 (338 aa).

A helical membrane pass occupies residues 7–29 (VLWDVGYPLYTYGSICIIALIIW). At Ser-152 the chain carries Phosphoserine. The segment covering 290–306 (DRTKNIEKSPTVTKDHV) has biased composition (basic and acidic residues). The segment at 290 to 338 (DRTKNIEKSPTVTKDHVWGATTQKTTEDPEAQPPSTEEEGLIFCDAPSA) is disordered.

It belongs to the SPATA31 family.

It localises to the membrane. The protein is Protein SPATA31F3 of Homo sapiens (Human).